The sequence spans 369 residues: Protein VP6 (369 aa).

Disordered regions lie at residues 17 to 169 (KREL…LQGR) and 184 to 208 (LDRI…GGDR). Over residues 29-68 (LREKGSTEAKSKLKEDGEKKNKSEKEENKIHDDRRVESQK) the composition is skewed to basic and acidic residues. The segment covering 92 to 111 (TGGGDGSAGARTGIGGGGVG) has biased composition (gly residues). 2 stretches are compositionally biased toward basic and acidic residues: residues 137-148 (TGADRVANDDAT) and 196-208 (TEGE…GGDR).

Belongs to the orbivirus VP6 family.

Its subcellular location is the virion. The chain is Protein VP6 (Segment-9) from African horse sickness virus (AHSV).